Consider the following 198-residue polypeptide: MAQPELLWAAAGLMLLGVAVSACVRCQLYATKRGKDGSQGSRLERPQRFEVIRSCSAVTRRPERIKEPEHLARKAPEELSTSCHVGFESSAEPRYQNFLTEDCLHEDAAYVEPVPLDYYSHNRFFSPPNDEDSHSYQNVIIGDPCSSELDDAEDYENSTAIEVWKVQQAKAMLYAESQDEEPDYVNTDPTIDAVVLSK.

Residues 1–4 (MAQP) are Extracellular-facing. The chain crosses the membrane as a helical; Signal-anchor for type III membrane protein span at residues 5–24 (ELLWAAAGLMLLGVAVSACV). 2 S-palmitoyl cysteine lipidation sites follow: cysteine 23 and cysteine 26. Topologically, residues 25 to 198 (RCQLYATKRG…PTIDAVVLSK (174 aa)) are cytoplasmic. Tyrosine 136, tyrosine 155, and tyrosine 184 each carry phosphotyrosine.

In terms of assembly, when phosphorylated, interacts with GRB2. Phosphorylated on tyrosines following cross-linking of BCR; which induces the recruitment of GRB2.

The protein localises to the cell membrane. Functionally, involved in BCR (B-cell antigen receptor)-mediated signaling in B-cells. May also be involved in FCER1 (high affinity immunoglobulin epsilon receptor)-mediated signaling in mast cells and FCGR1 (high affinity immunoglobulin gamma Fc receptor I)-mediated signaling in myeloid cells. Couples activation of these receptors and their associated kinases with distal intracellular events such as calcium mobilization through the recruitment of GRB2. The protein is Linker for activation of T-cells family member 2 (LAT2) of Gallus gallus (Chicken).